A 314-amino-acid polypeptide reads, in one-letter code: Curved DNA-binding protein (314 aa).

Residues 5-69 enclose the J domain; that stretch reads DYYKILDVEP…EKRAEYDELR (65 aa). A disordered region spans residues 73-92; the sequence is RQGRPFQTPPGWQSRAGAGA.

Its subcellular location is the cytoplasm. The protein localises to the nucleoid. Its function is as follows. DNA-binding protein that preferentially recognizes a curved DNA sequence. It is probably a functional analog of DnaJ; displays overlapping activities with DnaJ, but functions under different conditions, probably acting as a molecular chaperone in an adaptive response to environmental stresses other than heat shock. Lacks autonomous chaperone activity; binds native substrates and targets them for recognition by DnaK. Its activity is inhibited by the binding of CbpM. This chain is Curved DNA-binding protein, found in Pseudomonas syringae pv. tomato (strain ATCC BAA-871 / DC3000).